A 217-amino-acid chain; its full sequence is tRNA (guanine-N(7)-)-methyltransferase (217 aa).

The S-adenosyl-L-methionine site is built by glutamate 43, aspartate 68, asparagine 101, and asparagine 123. Lysine 127 is a substrate binding site. The interaction with RNA stretch occupies residues 129–134 (RHNKRR). Residues aspartate 159 and 196–199 (TEYE) each bind substrate.

Belongs to the class I-like SAM-binding methyltransferase superfamily. TrmB family.

It catalyses the reaction guanosine(46) in tRNA + S-adenosyl-L-methionine = N(7)-methylguanosine(46) in tRNA + S-adenosyl-L-homocysteine. Its pathway is tRNA modification; N(7)-methylguanine-tRNA biosynthesis. In terms of biological role, catalyzes the formation of N(7)-methylguanine at position 46 (m7G46) in tRNA. The chain is tRNA (guanine-N(7)-)-methyltransferase from Clostridium botulinum (strain Loch Maree / Type A3).